The primary structure comprises 345 residues: S-adenosylmethionine:tRNA ribosyltransferase-isomerase (345 aa).

Belongs to the QueA family. In terms of assembly, monomer.

The protein resides in the cytoplasm. The enzyme catalyses 7-aminomethyl-7-carbaguanosine(34) in tRNA + S-adenosyl-L-methionine = epoxyqueuosine(34) in tRNA + adenine + L-methionine + 2 H(+). The protein operates within tRNA modification; tRNA-queuosine biosynthesis. Its function is as follows. Transfers and isomerizes the ribose moiety from AdoMet to the 7-aminomethyl group of 7-deazaguanine (preQ1-tRNA) to give epoxyqueuosine (oQ-tRNA). This is S-adenosylmethionine:tRNA ribosyltransferase-isomerase from Shewanella baltica (strain OS185).